We begin with the raw amino-acid sequence, 215 residues long: Probable phosphoglycerate mutase GpmB (215 aa).

Substrate is bound by residues 8–15, 21–22, Arg58, 82–85, 104–105, and 151–152; these read RHGETQWN, QG, ELDM, RR, and GM. His9 acts as the Tele-phosphohistidine intermediate in catalysis. Glu82 (proton donor/acceptor) is an active-site residue.

The protein belongs to the phosphoglycerate mutase family. GpmB subfamily.

The catalysed reaction is (2R)-2-phosphoglycerate = (2R)-3-phosphoglycerate. It participates in carbohydrate degradation; glycolysis; pyruvate from D-glyceraldehyde 3-phosphate: step 3/5. This chain is Probable phosphoglycerate mutase GpmB, found in Cronobacter sakazakii (strain ATCC BAA-894) (Enterobacter sakazakii).